The sequence spans 163 residues: Nucleotide-binding protein Mflv_5248 (163 aa).

The protein belongs to the YajQ family.

Nucleotide-binding protein. This Mycolicibacterium gilvum (strain PYR-GCK) (Mycobacterium gilvum (strain PYR-GCK)) protein is Nucleotide-binding protein Mflv_5248.